Consider the following 443-residue polypeptide: 26S proteasome regulatory subunit 4 homolog A (443 aa).

2 disordered regions span residues 1–55 and 87–108; these read MGQG…LPTV and RLKP…LRGT. Basic and acidic residues-rich tracts occupy residues 12–28 and 87–106; these read QGDR…KKFE and RLKP…DDLR. 229–236 is a binding site for ATP; it reads GEPGTGKT. Residues lysine 296 and lysine 433 each participate in a glycyl lysine isopeptide (Lys-Gly) (interchain with G-Cter in ubiquitin) cross-link.

This sequence belongs to the AAA ATPase family. As to quaternary structure, component of the 19S regulatory particle (RP/PA700) base subcomplex of the 26S proteasome. The 26S proteasome is composed of a core protease (CP), known as the 20S proteasome, capped at one or both ends by the 19S regulatory particle (RP/PA700). The RP/PA700 complex is composed of at least 17 different subunits in two subcomplexes, the base and the lid, which form the portions proximal and distal to the 20S proteolytic core, respectively. Required for innate immunity. Interacts with UNI. In terms of tissue distribution, preferentially expressed in the root and shoot apical meristem.

The protein localises to the cytoplasm. It localises to the P-body. The protein resides in the nucleus. Its function is as follows. The 26S protease is involved in the ATP-dependent degradation of ubiquitinated proteins. The regulatory (or ATPase) complex confers ATP dependency and substrate specificity to the 26S complex. Interacts with transit peptides of proteins targeted to the chloroplast, and may be involved in the degradation of unimported plastid protein precursors. Is required for the maintenance of postembryonic root and shoot meristems. Has a specific role in the regulation of organs size. Acts redundantly with RPT2B in the regulation of gametogenesis. With RPT2B plays a critical role in 26S proteasome assembly. Acts as an upstream signaling component for inducing both defense and morphological phenotypes in the constitutive active uni-1D mutant. Acts as a negative regulator of endoreduplication in trichome cells. May function after the completion of the third endoreduplication step (8C to 16C) mediated by RHL1. Acts as a negative regulator of transcriptional gene silencing (TGS) at specific endogenous genes through DNA methylation. Promotes post-transcriptional gene silencing (PTGS) by limiting the degradation of transgene aberrant RNAs by the RNA quality control (RQC) machinery, thus favoring their entry into cytoplasmic siRNA bodies where they can trigger PTGS. Involved in tolerance to zinc deficiency, possibly through alleviation of oxidative stresses or processing of poly-ubiquitinated proteins. Required for resistance to the fungal pathogen Golovinomyces cichoracearum. The chain is 26S proteasome regulatory subunit 4 homolog A from Arabidopsis thaliana (Mouse-ear cress).